The primary structure comprises 110 residues: Small ubiquitin-related modifier 3 (110 aa).

Residues Lys5 and Lys7 each participate in a glycyl lysine isopeptide (Lys-Gly) (interchain with G-Cter in SUMO2) cross-link. Lys11 participates in a covalent cross-link: Glycyl lysine isopeptide (Lys-Gly) (interchain with G-Cter in SUMO); alternate. Residue Lys11 forms a Glycyl lysine isopeptide (Lys-Gly) (interchain with G-Cter in SUMO2); alternate linkage. One can recognise a Ubiquitin-like domain in the interval 15–92 (DHINLKVAGQ…IDVFQQQTGG (78 aa)). Positions 89 to 101 (QTGGTASRASVPT) are enriched in polar residues. The interval 89–110 (QTGGTASRASVPTPSHFPDICY) is disordered. A Glycyl lysine isopeptide (Gly-Lys) (interchain with K-? in acceptor proteins) cross-link involves residue Gly92. The propeptide occupies 93 to 110 (TASRASVPTPSHFPDICY).

The protein belongs to the ubiquitin family. SUMO subfamily. As to quaternary structure, interacts with SAE2 and UBE2I. Covalently attached to a number of proteins. Interacts with USP25 (via ts SIM domain); the interaction sumoylates USP25 and inhibits its ubiquitin hydrolyzing activity. Interacts with BMAL1. Polymeric chains can be formed through Lys-11 cross-linking. In terms of processing, cleavage of precursor form by SENP1, SENP2 or SENP5 is necessary for function.

Its subcellular location is the cytoplasm. The protein localises to the nucleus. It is found in the PML body. Ubiquitin-like protein which can be covalently attached to target lysines either as a monomer or as a lysine-linked polymer. Does not seem to be involved in protein degradation and may function as an antagonist of ubiquitin in the degradation process. Plays a role in a number of cellular processes such as nuclear transport, DNA replication and repair, mitosis and signal transduction. Covalent attachment to its substrates requires prior activation by the E1 complex SAE1-SAE2 and linkage to the E2 enzyme UBE2I, and can be promoted by an E3 ligase such as PIAS1-4, RANBP2 or CBX4. Plays a role in the regulation of sumoylation status of SETX. The protein is Small ubiquitin-related modifier 3 (Sumo3) of Rattus norvegicus (Rat).